The sequence spans 148 residues: uncharacterized protein (148 aa).

Residues 1-17 (MCPPVRQRPAQAPPAKR) show a composition bias toward low complexity. Disordered stretches follow at residues 1–86 (MCPP…VQSP) and 122–148 (RAHR…TSPC). Residues 38–57 (RPPKMQRRPRPPVAKRRRFP) are compositionally biased toward basic residues. A compositionally biased stretch (polar residues) spans 134–148 (QSRQRPSPDSQTSPC).

The protein belongs to the Epstein-Barr virus BLLF2 family.

This is an uncharacterized protein from Homo sapiens (Human).